We begin with the raw amino-acid sequence, 1490 residues long: Leucine-rich repeat-containing protein 7 (1490 aa).

LRR repeat units follow at residues 23-44 (IISV…VFNF), 47-68 (TLEE…LFNC), 70-91 (ALRK…IASL), 93-114 (NLKE…IKCC), 116-137 (CLTI…FTQL), 139-161 (NLTQ…GRLV), 162-183 (KLRI…MHKL), 185-206 (QLER…LDQI), 208-229 (NLRE…IGKL), 231-253 (MLVY…SGCE), 254-275 (ALED…IGLL), 277-298 (KLTT…IGNL), 300-321 (LLEE…IGYL), 323-344 (SLRT…IGSC), 346-367 (NVTV…IGQM), 369-391 (RLRV…TKLK), and 392-413 (ELAA…QTEA). 3 positions are modified to phosphoserine: serine 439, serine 441, and serine 443. Basic and acidic residues predominate over residues 663 to 676 (KKESTDESEVDKTH). Disordered stretches follow at residues 663 to 704 (KKES…NTRM), 785 to 807 (AGEN…AHGR), and 822 to 899 (ELEQ…YHDP). Over residues 677-686 (CLNNSVSSGT) the composition is skewed to polar residues. Residues 687–700 (YSDYSPSQASSASS) show a composition bias toward low complexity. At threonine 831 the chain carries Phosphothreonine. A Phosphoserine modification is found at serine 850. Residues 859–871 (PSKLETTPTTSPL) are compositionally biased toward low complexity. Position 865 is a phosphothreonine (threonine 865). Phosphoserine is present on serine 869. Residues 872-882 (PERKDHMKEPT) are compositionally biased toward basic and acidic residues. Phosphoserine occurs at positions 947, 949, and 1118. Positions 1134–1144 (PHELPPGDRYG) are enriched in basic and acidic residues. Disordered stretches follow at residues 1134–1158 (PHEL…QSSI) and 1196–1218 (QRRP…TRPV). Arginine 1149 is modified (omega-N-methylarginine). The segment covering 1196–1217 (QRRPLSARSYSTESYGASQTRP) has biased composition (polar residues). Serine 1233 is modified (phosphoserine). Disordered regions lie at residues 1238–1265 (GNYG…SCGK) and 1282–1312 (RLDR…PYPL). Residues 1243-1263 (KTSDNSDIKTRPTPVKGEESC) show a composition bias toward basic and acidic residues. Residues 1286–1307 (TPSQQSNILDNGQEDVSPSGQW) show a composition bias toward polar residues. Phosphoserine occurs at positions 1288 and 1392. Residues 1398–1488 (EQFCVRIEKN…TVDLVIQREL (91 aa)) form the PDZ domain.

Belongs to the LAP (LRR and PDZ) protein family. As to quaternary structure, interacts with CNKSR2 and DLG4. Interacts with CTNND2/Catenin delta-2. Forms a complex with N-cadherin through CTNND2. Interacts with CAMK2A. In terms of tissue distribution, expressed in brain (at protein level).

The protein localises to the cytoplasm. The protein resides in the postsynaptic density. Required for normal synaptic spine architecture and function. Necessary for DISC1 and GRM5 localization to postsynaptic density complexes and for both N-methyl D-aspartate receptor-dependent and metabotropic glutamate receptor-dependent long term depression. The sequence is that of Leucine-rich repeat-containing protein 7 (Lrrc7) from Mus musculus (Mouse).